The following is a 468-amino-acid chain: Protein maelstrom 2 (468 aa).

The segment at residues 2–69 is a DNA-binding region (HMG box); that stretch reads PPKKHSGFMM…LTRVKKERLN (68 aa). Residues 374-393 form a disordered region; that stretch reads KEDSPTVLSPASSRRSLASS. The segment covering 381-393 has biased composition (low complexity); sequence LSPASSRRSLASS.

The protein belongs to the maelstrom family.

It localises to the cytoplasm. It is found in the nucleus. Involved both in the piRNA and miRNA metabolic processes. As a component of the meiotic nuage, plays a central role during oogenesis by repressing transposable elements and preventing their mobilization, which is essential for the germline integrity. Repression of transposable elements is mediated via the piRNA metabolic process, which mediates the repression of transposable elements during meiosis by forming complexes composed of piRNAs and Piwi proteins and governs the repression of transposons. As a nuclear component, it is required for proper differentiation in the germline stem cell (GSC) lineage by repressing microRNA-7 (miR-7), thereby acting as an indirect regulator of bag-of-marbles (Bam). Acts by binding to the promoter of miR-7 gene and repressing its expression; miR-7 repression alleviates the Bam repression by miR-7, thereby allowing differentiation in the germline stem cell (GSC) lineage. This is Protein maelstrom 2 (mael2) from Drosophila ananassae (Fruit fly).